A 291-amino-acid chain; its full sequence is Cilia- and flagella-associated protein 298 (291 aa).

The protein belongs to the CFAP298 family.

The chain is Cilia- and flagella-associated protein 298 from Drosophila melanogaster (Fruit fly).